Here is a 458-residue protein sequence, read N- to C-terminus: Argininosuccinate lyase (458 aa).

Belongs to the lyase 1 family. Argininosuccinate lyase subfamily.

It localises to the cytoplasm. The catalysed reaction is 2-(N(omega)-L-arginino)succinate = fumarate + L-arginine. It functions in the pathway amino-acid biosynthesis; L-arginine biosynthesis; L-arginine from L-ornithine and carbamoyl phosphate: step 3/3. The sequence is that of Argininosuccinate lyase from Salmonella paratyphi B (strain ATCC BAA-1250 / SPB7).